Here is a 466-residue protein sequence, read N- to C-terminus: Proline--tRNA ligase (466 aa).

The protein belongs to the class-II aminoacyl-tRNA synthetase family. ProS type 3 subfamily. As to quaternary structure, homodimer.

Its subcellular location is the cytoplasm. It carries out the reaction tRNA(Pro) + L-proline + ATP = L-prolyl-tRNA(Pro) + AMP + diphosphate. Functionally, catalyzes the attachment of proline to tRNA(Pro) in a two-step reaction: proline is first activated by ATP to form Pro-AMP and then transferred to the acceptor end of tRNA(Pro). The protein is Proline--tRNA ligase of Picrophilus torridus (strain ATCC 700027 / DSM 9790 / JCM 10055 / NBRC 100828 / KAW 2/3).